A 1285-amino-acid polypeptide reads, in one-letter code: Peroxisomal ATPase PEX1 (1285 aa).

The span at Q344–M353 shows a compositional bias: polar residues. The disordered stretch occupies residues Q344–D373. Phosphoserine is present on S354. A compositionally biased stretch (basic and acidic residues) spans P355–D373. Residues G601–S608 and G883–T890 each bind ATP. The segment covering N1142–Q1161 has biased composition (polar residues). The tract at residues N1142 to D1162 is disordered. 3 positions are modified to phosphoserine: S1183, S1211, and S1213. The tract at residues F1262–A1285 is disordered.

It belongs to the AAA ATPase family. Homooligomer; homooligomerizes in the cytosol, interaction with PEX6 promotes dissociation of the homooligomer. Interacts with PEX6; forming the PEX1-PEX6 AAA ATPase complex, which is composed of a heterohexamer formed by a trimer of PEX1-PEX6 dimers. Interacts indirectly with PEX26, via its interaction with PEX6.

It is found in the cytoplasm. It localises to the cytosol. The protein resides in the peroxisome membrane. It catalyses the reaction ATP + H2O = ADP + phosphate + H(+). Its function is as follows. Component of the PEX1-PEX6 AAA ATPase complex, a protein dislocase complex that mediates the ATP-dependent extraction of the PEX5 receptor from peroxisomal membranes, an essential step for PEX5 recycling. Specifically recognizes PEX5 monoubiquitinated at 'Cys-11', and pulls it out of the peroxisome lumen through the PEX2-PEX10-PEX12 retrotranslocation channel. Extraction by the PEX1-PEX6 AAA ATPase complex is accompanied by unfolding of the TPR repeats and release of bound cargo from PEX5. This Cricetulus griseus (Chinese hamster) protein is Peroxisomal ATPase PEX1.